The chain runs to 101 residues: Large ribosomal subunit protein eL21 (101 aa).

The segment covering 1 to 18 (MVKHSKGYRTRSRSLLRK) has biased composition (basic residues). The segment at 1–24 (MVKHSKGYRTRSRSLLRKSPRERG) is disordered.

It belongs to the eukaryotic ribosomal protein eL21 family.

The chain is Large ribosomal subunit protein eL21 (rpl21e) from Saccharolobus solfataricus (strain ATCC 35092 / DSM 1617 / JCM 11322 / P2) (Sulfolobus solfataricus).